The chain runs to 1687 residues: Muscle calcium channel subunit alpha-1 (1687 aa).

Residues 1-33 (MDDAVCPTETDNVQNKQKATTPKRTQRRGGKQQ) are disordered. Over 1–61 (MDDAVCPTET…IFCIKIVDSK (61 aa)) the chain is Cytoplasmic. Residues 9 to 23 (ETDNVQNKQKATTPK) show a composition bias toward polar residues. One copy of the I repeat lies at 48 to 330 (NPLRIFCIKI…LILGVLSGEF (283 aa)). Residues 62–80 (LFEYFILLTIFANCVALAV) traverse the membrane as a helical segment. The Extracellular segment spans residues 81-99 (YTPYPSGDSNITNQMLEKI). N90 is a glycosylation site (N-linked (GlcNAc...) asparagine). Residues 100 to 117 (EYIFLVIFTSECVMKIIA) form a helical membrane-spanning segment. Topologically, residues 118 to 130 (YGFVLHTGSYLRN) are cytoplasmic. The chain crosses the membrane as a helical span at residues 131–145 (GWNFLDFFIVVIGMI). Residues 146–157 (STALSNLVKEGF) are Extracellular-facing. Residues 158 to 176 (DVKALRAFRVLRPLRLVSG) form a helical membrane-spanning segment. The Cytoplasmic portion of the chain corresponds to 177 to 196 (VPSLQVVLNSILKAMIPLLH). Residues 197 to 216 (IALLVLFVIIIYAIIGLELF) traverse the membrane as a helical segment. Over 217–302 (SGKLHKTCRH…SIQDAMGSSW (86 aa)) the chain is Extracellular. Residue E285 coordinates Ca(2+). Residues 303 to 327 (EWIYFVSMVILGAFFVMNLILGVLS) form a helical membrane-spanning segment. Over 328–434 (GEFSKERTKA…RACRKAVKSQ (107 aa)) the chain is Cytoplasmic. The stretch at 420–667 (NRRIRRACRK…VFLAIAVDNL (248 aa)) is one II repeat. The chain crosses the membrane as a helical span at residues 435-454 (AFYWLIILLVFLNTGVLATE). Topologically, residues 455–467 (HYRQPIWLDQFQE) are extracellular. The chain crosses the membrane as a helical span at residues 468 to 487 (YTNIFFIALFTCEMILKMYS). Residues 488–496 (LGFQGYFVS) lie on the Cytoplasmic side of the membrane. A helical transmembrane segment spans residues 497-515 (LFNRFDCFVVIGSISEMVL). Topologically, residues 516-525 (TSSELMAPLG) are extracellular. The chain crosses the membrane as a helical span at residues 526-544 (VSVLRCVRLLRVFKVTKYW). The Cytoplasmic segment spans residues 545–563 (HSLSNLVASLLNSIQSIAS). A helical membrane pass occupies residues 564 to 583 (LLLLLFLFIVIFGLLGMQVF). The Extracellular portion of the chain corresponds to 584–639 (GGRFTFKPEEEKPRSNFDSFYQSLLTVFQILTGEDWNVVMYDGIRAYGGVFSFGIV). E617 contacts Ca(2+). A helical transmembrane segment spans residues 640 to 664 (ACIYYIILFICGNYILLNVFLAIAV). The Cytoplasmic segment spans residues 665–785 (DNLADADSLS…TNRFRIFCHR (121 aa)). An III repeat occupies 777–1059 (NRFRIFCHRL…IFVGFVIVTF (283 aa)). The chain crosses the membrane as a helical span at residues 786 to 809 (LCNHSNFGNFILCCIMFSSAMLAA). Topologically, residues 810–826 (ENPLKADASRNIVLNKF) are extracellular. The helical transmembrane segment at 827–846 (DYFFTAVFTIELVLKLISYG) threads the bilayer. Residues 847 to 854 (FVLHDGAF) are Cytoplasmic-facing. Residues 855 to 877 (CRSAFNLLDLLVVCVSLISIFFN) traverse the membrane as a helical segment. The Extracellular portion of the chain corresponds to 878–885 (SNAISVVK). A helical transmembrane segment spans residues 886–900 (ILRVLRVLRPLRAIN). The Cytoplasmic portion of the chain corresponds to 901-921 (RAKGLKHVVQCVIVAVKTIGN). Residues 922 to 941 (IVLVTCLLQFMFAVIGVQLF) form a helical membrane-spanning segment. Residues 942–1030 (KGKFFSCSDG…NGGPIYNFRP (89 aa)) lie on the Extracellular side of the membrane. The segment at 979-1068 (REWKNNKFHF…FQNEGEQEYK (90 aa)) is dihydropyridine binding. A Ca(2+)-binding site is contributed by E1005. A helical transmembrane segment spans residues 1031–1055 (IVAAYYIIYIIIIAFFMVNIFVGFV). Over 1056–1110 (IVTFQNEGEQEYKNCELDKNQRNCIEFALKAKPVRRYIPKHSIQYKVWWFVTSSS) the chain is Cytoplasmic. One copy of the IV repeat lies at 1096 to 1370 (HSIQYKVWWF…LFVAVIMDNF (275 aa)). The helical transmembrane segment at 1111–1129 (FEYSIFVLIMINTVTLAMK) threads the bilayer. Topologically, residues 1130–1143 (FYKQPEYYSEILDA) are extracellular. A helical membrane pass occupies residues 1144–1163 (LNMIFTAVFSLEFIFKLAAF). The Cytoplasmic portion of the chain corresponds to 1164 to 1172 (RFKNYFGDA). The chain crosses the membrane as a helical span at residues 1173–1191 (WNTFDFIIVLGSFIDIVYS). Residues 1192–1219 (EIKTKEQALATCDGQSCNKAKGGSTLIS) lie on the Extracellular side of the membrane. Residues 1220-1238 (INFFRLFRVMRLVKLLSKG) traverse the membrane as a helical segment. At 1239–1257 (EGIRTLLWTFIKSFQALPY) the chain is on the cytoplasmic side. Residues 1258–1277 (VALLIVMLFFIYAVIGMQVF) form a helical membrane-spanning segment. The Extracellular segment spans residues 1278 to 1343 (GKIMLEEGTS…AVNNCGSSIA (66 aa)). The tract at residues 1327–1389 (KCDPESDAVN…LGPHHLDEFI (63 aa)) is dihydropyridine binding. A phenylalkylamine binding region spans residues 1337 to 1378 (NCGSSIAFPYFISFYVLCSFLIINLFVAVIMDNFDYLTRDWS). Residues 1344–1362 (FPYFISFYVLCSFLIINLF) form a helical membrane-spanning segment. The Cytoplasmic segment spans residues 1363–1687 (VAVIMDNFDY…PKSKDKDEEF (325 aa)).

The protein belongs to the calcium channel alpha-1 subunit (TC 1.A.1.11) family. As to expression, predominantly expressed in the larval body wall musculature. In adults, highest expression in thorax followed by head and at a lower extent by abdomen.

The protein localises to the membrane. In terms of biological role, voltage-sensitive calcium channels (VSCC) mediate the entry of calcium ions into excitable cells and are also involved in a variety of calcium-dependent processes, including muscle contraction, hormone or neurotransmitter release, gene expression, cell motility, cell division and cell death. MDL-alpha1 encodes a dihydropyridine- and diltiazem-sensitive current in larval body wall muscle. The chain is Muscle calcium channel subunit alpha-1 from Musca domestica (House fly).